A 212-amino-acid polypeptide reads, in one-letter code: Imidazole glycerol phosphate synthase subunit HisH (212 aa).

The Glutamine amidotransferase type-1 domain maps to 3-208 (RIVIVDYGMG…GRMVCDLIST (206 aa)). Residue Cys81 is the Nucleophile of the active site. Catalysis depends on residues His183 and Glu185.

Heterodimer of HisH and HisF.

Its subcellular location is the cytoplasm. It catalyses the reaction 5-[(5-phospho-1-deoxy-D-ribulos-1-ylimino)methylamino]-1-(5-phospho-beta-D-ribosyl)imidazole-4-carboxamide + L-glutamine = D-erythro-1-(imidazol-4-yl)glycerol 3-phosphate + 5-amino-1-(5-phospho-beta-D-ribosyl)imidazole-4-carboxamide + L-glutamate + H(+). The catalysed reaction is L-glutamine + H2O = L-glutamate + NH4(+). Its pathway is amino-acid biosynthesis; L-histidine biosynthesis; L-histidine from 5-phospho-alpha-D-ribose 1-diphosphate: step 5/9. IGPS catalyzes the conversion of PRFAR and glutamine to IGP, AICAR and glutamate. The HisH subunit catalyzes the hydrolysis of glutamine to glutamate and ammonia as part of the synthesis of IGP and AICAR. The resulting ammonia molecule is channeled to the active site of HisF. This Symbiobacterium thermophilum (strain DSM 24528 / JCM 14929 / IAM 14863 / T) protein is Imidazole glycerol phosphate synthase subunit HisH.